Consider the following 101-residue polypeptide: MAKISMINRDLKRKRLAKKFADKRLSLKKVISSYASSYEEKIEASCKLQKLPRDSSPTRLRNRCEISGRPRGVYCKFGLGRNKLREAAMRGDIPGLRKASW.

This sequence belongs to the universal ribosomal protein uS14 family. In terms of assembly, part of the 30S ribosomal subunit. Contacts proteins S3 and S10.

Binds 16S rRNA, required for the assembly of 30S particles and may also be responsible for determining the conformation of the 16S rRNA at the A site. The chain is Small ribosomal subunit protein uS14 from Xylella fastidiosa (strain M23).